We begin with the raw amino-acid sequence, 257 residues long: tRNA pseudouridine synthase A (257 aa).

The Nucleophile role is filled by Asp-53. Substrate is bound at residue Tyr-111.

The protein belongs to the tRNA pseudouridine synthase TruA family. In terms of assembly, homodimer.

It carries out the reaction uridine(38/39/40) in tRNA = pseudouridine(38/39/40) in tRNA. Formation of pseudouridine at positions 38, 39 and 40 in the anticodon stem and loop of transfer RNAs. In Xylella fastidiosa (strain M12), this protein is tRNA pseudouridine synthase A.